The sequence spans 202 residues: Remorin 1.4 (202 aa).

The span at 1 to 10 (MAEEEPKKVT) shows a compositional bias: basic and acidic residues. Residues 1 to 79 (MAEEEPKKVT…VEEEKKEGSV (79 aa)) are disordered. A compositionally biased stretch (low complexity) spans 25–39 (EKPAAAADVAPQEKP). Residues 40–50 (VAPPPVLPSPA) show a composition bias toward pro residues. Residues 68–79 (KEVEEEKKEGSV) are compositionally biased toward basic and acidic residues. A coiled-coil region spans residues 123 to 169 (ENNKKAAVEAELKKMEEQLEKKKAEYVEQMKNKIAQIHKEAEEKRAM).

It belongs to the remorin family.

The polypeptide is Remorin 1.4 (Arabidopsis thaliana (Mouse-ear cress)).